A 145-amino-acid polypeptide reads, in one-letter code: Putative pre-16S rRNA nuclease (145 aa).

Belongs to the YqgF nuclease family.

The protein localises to the cytoplasm. Could be a nuclease involved in processing of the 5'-end of pre-16S rRNA. In Pseudomonas fluorescens (strain SBW25), this protein is Putative pre-16S rRNA nuclease.